A 189-amino-acid chain; its full sequence is MAQYSTNEFKGGLKIMLDGDPYTIVENEFVKPGKGQAFNRVKVRNLKTGKVIDRTFKSGESVEAADVLETEMQFLYSDGEFFHMMDPETFEQKAAPASAVGDAAKWLKEQAMCTVILWNDEPLTVEPPNFVELRVVETDPGVRGDTSGGGGKPATLETGAVVRVPLFIEEGELLKVDTRSGEYVGRVKG.

Lysine 34 bears the N6-(3,6-diaminohexanoyl)-5-hydroxylysine mark.

It belongs to the elongation factor P family. Post-translationally, may be beta-lysylated on the epsilon-amino group of Lys-34 by the combined action of EpmA and EpmB, and then hydroxylated on the C5 position of the same residue by EpmC (if this protein is present). Lysylation is critical for the stimulatory effect of EF-P on peptide-bond formation. The lysylation moiety may extend toward the peptidyltransferase center and stabilize the terminal 3-CCA end of the tRNA. Hydroxylation of the C5 position on Lys-34 may allow additional potential stabilizing hydrogen-bond interactions with the P-tRNA.

The protein resides in the cytoplasm. It functions in the pathway protein biosynthesis; polypeptide chain elongation. Its function is as follows. Involved in peptide bond synthesis. Alleviates ribosome stalling that occurs when 3 or more consecutive Pro residues or the sequence PPG is present in a protein, possibly by augmenting the peptidyl transferase activity of the ribosome. Modification of Lys-34 is required for alleviation. The chain is Elongation factor P from Alkalilimnicola ehrlichii (strain ATCC BAA-1101 / DSM 17681 / MLHE-1).